Here is a 586-residue protein sequence, read N- to C-terminus: Dual specificity tyrosine-phosphorylation-regulated kinase 3 (586 aa).

The segment covering 1 to 13 (MGGAARDRGRKDA) has biased composition (basic and acidic residues). A disordered region spans residues 1 to 187 (MGGAARDRGR…QGVIGGPNNG (187 aa)). In terms of domain architecture, Protein kinase spans 208–521 (YEVLKIIGKG…PAQALRHPWI (314 aa)). Residues 214 to 222 (IGKGSFGQV), lysine 237, and 287 to 290 (FELL) contribute to the ATP site. The active-site Proton acceptor is aspartate 334. Tyrosine 368 carries the post-translational modification Phosphotyrosine. Positions 467–480 (RSRRGKKRGPPGSK) match the Nuclear localization signal motif.

The protein belongs to the protein kinase superfamily. CMGC Ser/Thr protein kinase family. MNB/DYRK subfamily. As to quaternary structure, interacts with SIRT1. Mg(2+) is required as a cofactor. Post-translationally, ubiquitinated at anaphase by the anaphase-promoting complex (APC/C), leading to its degradation by the proteasome. In terms of processing, protein kinase activity is activated following autophosphorylation at Tyr-368.

The protein localises to the nucleus. Its subcellular location is the cytoplasm. It is found in the nucleus speckle. The protein resides in the cytoplasmic granule. It localises to the cytoskeleton. The protein localises to the microtubule organizing center. Its subcellular location is the centrosome. The enzyme catalyses L-seryl-[protein] + ATP = O-phospho-L-seryl-[protein] + ADP + H(+). It catalyses the reaction L-threonyl-[protein] + ATP = O-phospho-L-threonyl-[protein] + ADP + H(+). It carries out the reaction L-tyrosyl-[protein] + ATP = O-phospho-L-tyrosyl-[protein] + ADP + H(+). With respect to regulation, protein kinase activity is activated following autophosphorylation at Tyr-368. Dual-specificity protein kinase that promotes disassembly of several types of membraneless organelles during mitosis, such as stress granules, nuclear speckles and pericentriolar material. Dual-specificity tyrosine-regulated kinases (DYRKs) autophosphorylate a critical tyrosine residue in their activation loop and phosphorylate their substrate on serine and threonine residues. Acts as a central dissolvase of membraneless organelles during the G2-to-M transition, after the nuclear-envelope breakdown: acts by mediating phosphorylation of multiple serine and threonine residues in unstructured domains of proteins, such as SRRM1 and PCM1. Does not mediate disassembly of all membraneless organelles: disassembly of P-body and nucleolus is not regulated by DYRK3. Dissolution of membraneless organelles at the onset of mitosis is also required to release mitotic regulators, such as ZNF207, from liquid-unmixed organelles where they are sequestered and keep them dissolved during mitosis. Regulates mTORC1 by mediating the dissolution of stress granules: during stressful conditions, DYRK3 partitions from the cytosol to the stress granule, together with mTORC1 components, which prevents mTORC1 signaling. When stress signals are gone, the kinase activity of DYRK3 is required for the dissolution of stress granule and mTORC1 relocation to the cytosol: acts by mediating the phosphorylation of the mTORC1 inhibitor AKT1S1, allowing full reactivation of mTORC1 signaling. Also acts as a negative regulator of EPO-dependent erythropoiesis: may place an upper limit on red cell production during stress erythropoiesis. Inhibits cell death due to cytokine withdrawal in hematopoietic progenitor cells. Promotes cell survival upon genotoxic stress through phosphorylation of SIRT1: this in turn inhibits p53/TP53 activity and apoptosis. The protein is Dual specificity tyrosine-phosphorylation-regulated kinase 3 of Mus musculus (Mouse).